Reading from the N-terminus, the 414-residue chain is ATP-dependent Clp protease ATP-binding subunit ClpX (414 aa).

The 51-residue stretch at 1 to 51 (MADSKTKKKCSFCGRSENEVGFLITGMNGYICDSCATQAYEITQEALGEGR) folds into the ClpX-type ZB domain. Residues Cys-10, Cys-13, Cys-32, and Cys-35 each coordinate Zn(2+). 120–127 (STGTGKTL) serves as a coordination point for ATP.

Belongs to the ClpX chaperone family. As to quaternary structure, component of the ClpX-ClpP complex. Forms a hexameric ring that, in the presence of ATP, binds to fourteen ClpP subunits assembled into a disk-like structure with a central cavity, resembling the structure of eukaryotic proteasomes.

Its function is as follows. ATP-dependent specificity component of the Clp protease. It directs the protease to specific substrates. Can perform chaperone functions in the absence of ClpP. This Bacteroides thetaiotaomicron (strain ATCC 29148 / DSM 2079 / JCM 5827 / CCUG 10774 / NCTC 10582 / VPI-5482 / E50) protein is ATP-dependent Clp protease ATP-binding subunit ClpX.